We begin with the raw amino-acid sequence, 699 residues long: Cysteine--tRNA ligase (699 aa).

Positions 1-226 are unknown; that stretch reads MTTITEKRLT…SEQQRLIHNP (226 aa). A Zn(2+)-binding site is contributed by Cys254. A 'HIGH' region motif is present at residues 256 to 266; the sequence is MTVYDYCHLGH. 3 residues coordinate Zn(2+): Cys435, His460, and Glu464. A 'KMSKS' region motif is present at residues 508–512; sequence KMSKS. Residue Lys511 coordinates ATP.

This sequence belongs to the class-I aminoacyl-tRNA synthetase family. As to quaternary structure, monomer. Requires Zn(2+) as cofactor.

Its subcellular location is the cytoplasm. It carries out the reaction tRNA(Cys) + L-cysteine + ATP = L-cysteinyl-tRNA(Cys) + AMP + diphosphate. The chain is Cysteine--tRNA ligase (cysS) from Neisseria meningitidis serogroup A / serotype 4A (strain DSM 15465 / Z2491).